A 24-amino-acid polypeptide reads, in one-letter code: MPGKVQDFFLCSLLLCIVSAGWCG.

The chain is Positive regulator of RepFIC repA1 expression (repL) from Escherichia coli (strain K12).